The sequence spans 271 residues: Ribosomal RNA small subunit methyltransferase A (271 aa).

S-adenosyl-L-methionine-binding residues include His11, Leu13, Gly38, Glu58, Asp86, and Asn101.

This sequence belongs to the class I-like SAM-binding methyltransferase superfamily. rRNA adenine N(6)-methyltransferase family. RsmA subfamily.

The protein localises to the cytoplasm. The catalysed reaction is adenosine(1518)/adenosine(1519) in 16S rRNA + 4 S-adenosyl-L-methionine = N(6)-dimethyladenosine(1518)/N(6)-dimethyladenosine(1519) in 16S rRNA + 4 S-adenosyl-L-homocysteine + 4 H(+). Its function is as follows. Specifically dimethylates two adjacent adenosines (A1518 and A1519) in the loop of a conserved hairpin near the 3'-end of 16S rRNA in the 30S particle. May play a critical role in biogenesis of 30S subunits. This Helicobacter pylori (strain G27) protein is Ribosomal RNA small subunit methyltransferase A.